Reading from the N-terminus, the 350-residue chain is Arabinogalactan endo-beta-1,4-galactanase (350 aa).

A signal peptide spans M1–A16. A glycan (N-linked (GlcNAc...) asparagine) is linked at N128. The active-site Proton donor is the E152. E262 (nucleophile) is an active-site residue.

It belongs to the glycosyl hydrolase 53 family. Glycosylated.

It catalyses the reaction The enzyme specifically hydrolyzes (1-&gt;4)-beta-D-galactosidic linkages in type I arabinogalactans.. The polypeptide is Arabinogalactan endo-beta-1,4-galactanase (gal1) (Aspergillus aculeatus).